The following is a 469-amino-acid chain: GTPase Der (469 aa).

2 consecutive EngA-type G domains span residues 30–193 and 203–376; these read PVLA…PEVA and RRVA…ASWD. Residues 36 to 43, 83 to 87, 145 to 148, 209 to 216, 256 to 260, and 321 to 324 each bind GTP; these read GRPNVGKS, DTGGW, NKVD, GKPNVGKS, DTAGL, and NKWD. The KH-like domain maps to 377 to 459; the sequence is TRIPTGPLNS…PIRINVRVRE (83 aa).

Belongs to the TRAFAC class TrmE-Era-EngA-EngB-Septin-like GTPase superfamily. EngA (Der) GTPase family. Associates with the 50S ribosomal subunit.

Functionally, GTPase that plays an essential role in the late steps of ribosome biogenesis. This chain is GTPase Der, found in Mycobacterium ulcerans (strain Agy99).